A 209-amino-acid chain; its full sequence is Uracil phosphoribosyltransferase (209 aa).

5-phospho-alpha-D-ribose 1-diphosphate contacts are provided by residues R79, R104, and 131-139 (DPMLATGGS). Residues V194 and 199-201 (GDA) contribute to the uracil site. D200 is a binding site for 5-phospho-alpha-D-ribose 1-diphosphate.

The protein belongs to the UPRTase family. Mg(2+) is required as a cofactor.

The enzyme catalyses UMP + diphosphate = 5-phospho-alpha-D-ribose 1-diphosphate + uracil. It functions in the pathway pyrimidine metabolism; UMP biosynthesis via salvage pathway; UMP from uracil: step 1/1. Allosterically activated by GTP. In terms of biological role, catalyzes the conversion of uracil and 5-phospho-alpha-D-ribose 1-diphosphate (PRPP) to UMP and diphosphate. The sequence is that of Uracil phosphoribosyltransferase from Bacillus cereus (strain Q1).